The following is an 89-amino-acid chain: Translation initiation factor IF-1, chloroplastic (89 aa).

An S1-like domain is found at 1 to 73 (MKEKEAKWVV…TKGRIIYRLP (73 aa)).

This sequence belongs to the IF-1 family. Component of the 30S ribosomal translation pre-initiation complex which assembles on the 30S ribosome in the order IF-2 and IF-3, IF-1 and N-formylmethionyl-tRNA(fMet); mRNA recruitment can occur at any time during PIC assembly.

It is found in the plastid. It localises to the chloroplast. Its function is as follows. One of the essential components for the initiation of protein synthesis. Stabilizes the binding of IF-2 and IF-3 on the 30S subunit to which N-formylmethionyl-tRNA(fMet) subsequently binds. Helps modulate mRNA selection, yielding the 30S pre-initiation complex (PIC). Upon addition of the 50S ribosomal subunit IF-1, IF-2 and IF-3 are released leaving the mature 70S translation initiation complex. In Jasminum nudiflorum (Winter jasmine), this protein is Translation initiation factor IF-1, chloroplastic.